Reading from the N-terminus, the 95-residue chain is Large ribosomal subunit protein bL25 (95 aa).

The protein belongs to the bacterial ribosomal protein bL25 family. As to quaternary structure, part of the 50S ribosomal subunit; part of the 5S rRNA/L5/L18/L25 subcomplex. Contacts the 5S rRNA. Binds to the 5S rRNA independently of L5 and L18.

Its function is as follows. This is one of the proteins that binds to the 5S RNA in the ribosome where it forms part of the central protuberance. This chain is Large ribosomal subunit protein bL25, found in Shewanella amazonensis (strain ATCC BAA-1098 / SB2B).